Here is a 548-residue protein sequence, read N- to C-terminus: Folylpolyglutamate synthase (548 aa).

130–133 (GKGS) contacts ATP. Positions 157, 234, and 262 each coordinate Mg(2+). ATP contacts are provided by Arg-382 and Asp-396.

Belongs to the folylpolyglutamate synthase family. Requires a monovalent cation as cofactor.

The protein resides in the mitochondrion inner membrane. It is found in the mitochondrion matrix. It localises to the cytoplasm. It carries out the reaction (6S)-5,6,7,8-tetrahydrofolyl-(gamma-L-Glu)(n) + L-glutamate + ATP = (6S)-5,6,7,8-tetrahydrofolyl-(gamma-L-Glu)(n+1) + ADP + phosphate + H(+). The protein operates within cofactor biosynthesis; tetrahydrofolylpolyglutamate biosynthesis. Catalyzes conversion of folates to polyglutamate derivatives allowing concentration of folate compounds in the cell and the intracellular retention of these cofactors, which are important substrates for most of the folate-dependent enzymes that are involved in one-carbon transfer reactions involved in purine, pyrimidine and amino acid synthesis. Required for methionine synthesis and maintenance of intact mitochondrial DNA. Involved in telomere maintenance. The polypeptide is Folylpolyglutamate synthase (Saccharomyces cerevisiae (strain AWRI1631) (Baker's yeast)).